The primary structure comprises 429 residues: Enolase 1 (429 aa).

Q163 contributes to the (2R)-2-phosphoglycerate binding site. The active-site Proton donor is the E205. Mg(2+) is bound by residues D242, E287, and D314. (2R)-2-phosphoglycerate-binding residues include K339, R368, S369, and K390. The active-site Proton acceptor is K339.

The protein belongs to the enolase family. The cofactor is Mg(2+).

It localises to the cytoplasm. Its subcellular location is the secreted. It is found in the cell surface. The enzyme catalyses (2R)-2-phosphoglycerate = phosphoenolpyruvate + H2O. It functions in the pathway carbohydrate degradation; glycolysis; pyruvate from D-glyceraldehyde 3-phosphate: step 4/5. Functionally, catalyzes the reversible conversion of 2-phosphoglycerate (2-PG) into phosphoenolpyruvate (PEP). It is essential for the degradation of carbohydrates via glycolysis. The sequence is that of Enolase 1 from Cupriavidus metallidurans (strain ATCC 43123 / DSM 2839 / NBRC 102507 / CH34) (Ralstonia metallidurans).